Reading from the N-terminus, the 72-residue chain is DNA-directed RNA polymerase subunit Rpo10 (72 aa).

Residues C7, C10, C54, and C55 each contribute to the Zn(2+) site.

Belongs to the archaeal Rpo10/eukaryotic RPB10 RNA polymerase subunit family. As to quaternary structure, part of the RNA polymerase complex. It depends on Zn(2+) as a cofactor.

It localises to the cytoplasm. The catalysed reaction is RNA(n) + a ribonucleoside 5'-triphosphate = RNA(n+1) + diphosphate. Its function is as follows. DNA-dependent RNA polymerase (RNAP) catalyzes the transcription of DNA into RNA using the four ribonucleoside triphosphates as substrates. In Picrophilus torridus (strain ATCC 700027 / DSM 9790 / JCM 10055 / NBRC 100828 / KAW 2/3), this protein is DNA-directed RNA polymerase subunit Rpo10.